The following is a 925-amino-acid chain: ETO1-like protein 2 (925 aa).

The 101-residue stretch at 207 to 307 (SDISFCVGSE…ECEARLAASV (101 aa)) folds into the BTB domain. Residues 409–442 (ALSLHQMGCVLFERKDYKAAQFHFRLASSLGHVY) form a TPR 1 repeat. Residues 509–533 (KYRAVMKFEQKQIKEAFQEIDRLIQ) adopt a coiled-coil conformation. TPR repeat units follow at residues 538–571 (PECL…EPNY), 664–697 (AERL…QRSF), 738–771 (GQAL…KHIR), 773–803 (RQGL…SCSK), 834–867 (TYPY…RPEL), and 869–900 (TLHL…DPNH).

The protein belongs to the ETO1 family. As to quaternary structure, interacts with the C-terminal domain of ACS5. Constitutively expressed in green and etiolated seedlings.

Its pathway is protein modification; protein ubiquitination. Potential regulator of the ethylene pathway, which acts by regulating the stability of 1-aminocyclopropane-1-carboxylate synthase (ACS) enzymes. May act as a substrate-specific adapter that connects ACS enzymes, such as ACS5, to ubiquitin ligase complexes, leading to proteasomal degradation of ACS enzymes. The polypeptide is ETO1-like protein 2 (EOL2) (Arabidopsis thaliana (Mouse-ear cress)).